The chain runs to 235 residues: Type III pantothenate kinase (235 aa).

Residue 6–13 participates in ATP binding; the sequence is DVGNTSLK. Substrate contacts are provided by residues tyrosine 79 and 86–89; that span reads GIDR. Aspartate 88 functions as the Proton acceptor in the catalytic mechanism. A K(+)-binding site is contributed by aspartate 109. Threonine 112 serves as a coordination point for ATP. A substrate-binding site is contributed by threonine 164.

The protein belongs to the type III pantothenate kinase family. Homodimer. The cofactor is NH4(+). K(+) is required as a cofactor.

Its subcellular location is the cytoplasm. The catalysed reaction is (R)-pantothenate + ATP = (R)-4'-phosphopantothenate + ADP + H(+). It functions in the pathway cofactor biosynthesis; coenzyme A biosynthesis; CoA from (R)-pantothenate: step 1/5. Its function is as follows. Catalyzes the phosphorylation of pantothenate (Pan), the first step in CoA biosynthesis. The chain is Type III pantothenate kinase from Pseudoalteromonas translucida (strain TAC 125).